We begin with the raw amino-acid sequence, 329 residues long: GTP 3',8-cyclase (329 aa).

In terms of domain architecture, Radical SAM core spans 1–229; it reads MNPVDYLRIS…ESTIKGNGPA (229 aa). GTP is bound at residue Arg8. Residues Cys15 and Cys19 each coordinate [4Fe-4S] cluster. Tyr21 contacts S-adenosyl-L-methionine. Position 22 (Cys22) interacts with [4Fe-4S] cluster. GTP is bound at residue Arg60. Gly64 contributes to the S-adenosyl-L-methionine binding site. Thr91 contributes to the GTP binding site. Ser115 is a binding site for S-adenosyl-L-methionine. Residue Lys155 participates in GTP binding. Met189 is a binding site for S-adenosyl-L-methionine. [4Fe-4S] cluster is bound by residues Cys252 and Cys255. Residue 257 to 259 participates in GTP binding; that stretch reads RMR. Residue Cys269 participates in [4Fe-4S] cluster binding.

Belongs to the radical SAM superfamily. MoaA family. As to quaternary structure, monomer and homodimer. [4Fe-4S] cluster is required as a cofactor.

It carries out the reaction GTP + AH2 + S-adenosyl-L-methionine = (8S)-3',8-cyclo-7,8-dihydroguanosine 5'-triphosphate + 5'-deoxyadenosine + L-methionine + A + H(+). It functions in the pathway cofactor biosynthesis; molybdopterin biosynthesis. In terms of biological role, catalyzes the cyclization of GTP to (8S)-3',8-cyclo-7,8-dihydroguanosine 5'-triphosphate. The chain is GTP 3',8-cyclase from Rippkaea orientalis (strain PCC 8801 / RF-1) (Cyanothece sp. (strain PCC 8801)).